The primary structure comprises 1529 residues: ATP-dependent permease PDR15 (1529 aa).

Residues 1–13 (MSSDIRDVEERNS) show a composition bias toward basic and acidic residues. A disordered region spans residues 1–38 (MSSDIRDVEERNSRSSSSSSSSNSAAQSIGQHPYRGFD). Topologically, residues 1 to 531 (MSSDIRDVEE…NFWRMKQSAS (531 aa)) are cytoplasmic. Residues 14-24 (RSSSSSSSSNS) are compositionally biased toward low complexity. One can recognise an ABC transporter 1 domain in the interval 171–420 (LRLLKPSKEE…FQDMGYYCPP (250 aa)). The helical transmembrane segment at 532–552 (VTLWQVIGNSVMAFILGSMFY) threads the bilayer. Residues 553 to 567 (KVMKKNDTSTFYFRG) lie on the Extracellular side of the membrane. Asn558 carries an N-linked (GlcNAc...) asparagine glycan. The helical transmembrane segment at 568–588 (AAMFFAILFNAFSCLLEIFSL) threads the bilayer. The Cytoplasmic portion of the chain corresponds to 589–617 (YETRPITEKHRTYSLYHPSADAFASVLSE). Residues 618–638 (MPPKLITAVCFNIIFYFLVDF) form a helical membrane-spanning segment. Residues 639-642 (RRNG) are Extracellular-facing. The chain crosses the membrane as a helical span at residues 643–663 (GVFFFYFLINVIATFTLSHLF). At 664–699 (RCVGSLTKTLQEAMVPASMLLLAISMYTGFAIPKTK) the chain is on the cytoplasmic side. Residues 700–720 (ILGWSIWIWYINPLAYLFESL) form a helical membrane-spanning segment. Over 721–783 (MINEFHDRRF…YDYEHKHKWR (63 aa)) the chain is Extracellular. Asn744 carries an N-linked (GlcNAc...) asparagine glycan. The helical transmembrane segment at 784 to 804 (GFGIGMAYVVFFFFVYLILCE) threads the bilayer. The Cytoplasmic portion of the chain corresponds to 805–1219 (YNEGAKQKGE…LFQQYWRSPD (415 aa)). Residues 829 to 840 (EGKLQEKHRPGD) are compositionally biased toward basic and acidic residues. Residues 829-873 (EGKLQEKHRPGDIENNAGSSPDSATTEKKILDDSSEGSDSSSDNA) form a disordered region. Residues 884–1127 (FHWRDLCYDV…MIDYFESKGA (244 aa)) form the ABC transporter 2 domain. 920–927 (GASGAGKT) lines the ATP pocket. Residues 1220–1240 (YLWSKFILTIFNQVFIGFTFF) form a helical membrane-spanning segment. Residues 1241-1312 (KADRSLQGLQ…VEIPWNILAG (72 aa)) lie on the Extracellular side of the membrane. Residues 1313–1333 (TIAYCIYYYAVGFYANASAAG) form a helical membrane-spanning segment. Residues 1334–1340 (QLHERGA) lie on the Cytoplasmic side of the membrane. Residues 1341–1361 (LFWLFSIAFYVYIGSMGLLMI) form a helical membrane-spanning segment. At 1362–1368 (SFNEVAE) the chain is on the extracellular side. A helical membrane pass occupies residues 1369 to 1389 (TAAHMGTLLFTMALSFCGVMA). Topologically, residues 1390–1396 (TPKVMPR) are cytoplasmic. The chain crosses the membrane as a helical span at residues 1397 to 1417 (FWIFMYRVSPLTYMIDALLAL). Residues 1418–1492 (GVANVDVKCS…SSHYYRRWRN (75 aa)) lie on the Extracellular side of the membrane. The helical transmembrane segment at 1493–1513 (YGIFICYIAFDYIAATFLYWL) threads the bilayer. At 1514–1529 (SRVPKKNGKISEKPKK) the chain is on the cytoplasmic side.

This sequence belongs to the ABC transporter superfamily. ABCG family. PDR (TC 3.A.1.205) subfamily.

The protein resides in the membrane. The chain is ATP-dependent permease PDR15 (PDR15) from Saccharomyces cerevisiae (strain ATCC 204508 / S288c) (Baker's yeast).